The chain runs to 451 residues: MVVKVKQKIPLKIKRMGINGEGIGFYQKTLVFVPGALKGEDIFCQITAVKRNFAEAKLLTVNKASKNRVKPACSVYETCGGCQIMHLAYPKQLDFKDDVIRQALKKFKPTGYEQFEIRPTLGMKKPDHYRAKLQFQLRSFGGTVKAGLFSQGSHRLVPIDNCLVQDQLTQDIINKITQLVDKYKLPIYNERKIAGIRTIMVRKAQASDQVQIIVVSSKEVRLANFIGELTKAFPQVKTVALNSNRSKSSEIYGDETEILWGQEAIHEEVLDYGFALSPRAFYQLNPQQTEVLYGEVVKALDVGSKDHIIDAYCGVGSIGFAFAGKVKSVRGMDIIPEAIEDAQKNAKAMGFDNAYYEAGKAEDIISKWYKQGYRADAVIVDPPRTGLDDKLLKTILHYQPKQMVYVSCNTSTLARDLVQLTKVYDVHYIQSVDMFPHTARTEAVVKLQKRV.

In terms of domain architecture, TRAM spans Val-2–Thr-60. The [4Fe-4S] cluster site is built by Cys-73, Cys-79, Cys-82, and Cys-162. Residues Gln-283, Tyr-312, Asp-333, and Asp-381 each contribute to the S-adenosyl-L-methionine site. Residue Cys-408 is the Nucleophile of the active site.

The protein belongs to the class I-like SAM-binding methyltransferase superfamily. RNA M5U methyltransferase family.

This is an uncharacterized protein from Streptococcus pyogenes serotype M1.